The sequence spans 863 residues: Leucine-rich repeat and death domain-containing protein 1 (863 aa).

Disordered stretches follow at residues 1–37 and 51–100; these read MSEKEGMSEELEDTISQFRKESRSQSVKEPGFIKETS and SSNQ…SQSL. Residues 88–100 show a composition bias toward low complexity; that stretch reads SETSTRTETSQSL. 26 LRR repeats span residues 143 to 166, 167 to 189, 190 to 213, 214 to 236, 238 to 259, 260 to 282, 284 to 305, 306 to 328, 329 to 351, 353 to 374, 375 to 397, 398 to 420, 422 to 443, 445 to 466, 468 to 489, 490 to 513, 515 to 535, 536 to 558, 560 to 581, 582 to 604, 606 to 627, 630 to 653, 654 to 676, 678 to 699, 700 to 722, and 724 to 745; these read CKDNFTVNLEAKGLQEFPKDILKI, KYVKHLYLDKNQIKTFQGADSGD, LLGLEILSLQENGLSSLPSEIQLL, HNLRILNVSHNHISHIPKEISQL, NIRQLFFYNNYIENFPSDLECL, GNLEILSLGKNKLRHIPDTLPSL, YLRVLNLEYNQLTIFPKALCFL, PKLISLDLTGNLISSLPKEIREL, KNLETLLLDHNKLTFLAVEIFQL, KIKELQLADNKLEVISHKIENF, RELRILILDKNLLKNIPEKICCC, AMLECLTLSDNKLTELPKNIHKL, NLRKLHVNRNNMVKITDSISHL, NICSLEFSGNIIAGIPIEIKNC, KIIKIELNYNKIMYFPLGLCAL, DSLYYLSVNGNYISEIPADISFSK, LLHLELSENKLLIFSEHFCSL, INLKYLDLGKNQIKKIPASISNM, SLHVLILCCNKFETFPRELCTL, ENLRVLDLSENQLQKISSDICNL, RIQKLNFSSNQFIHFPIELCQL, LEQLNISQIKGRKLTRLPGELSNM, TQLKELDISNNAIREIPRNIGEL, NLVSLHAYNNQISYIPPSLLSL, NDLQQLNLSGNNLTALPSAIYNL, and SLKEINFDDNPLLRPPMEICKG. Residues 767–855 enclose the Death domain; sequence EKIFKIVANN…EIMDKITALN (89 aa). Residues 856–863 form an LRR 27 repeat; it reads LFTRAIKF.

In Macaca fascicularis (Crab-eating macaque), this protein is Leucine-rich repeat and death domain-containing protein 1 (LRRD1).